A 267-amino-acid chain; its full sequence is DNA repair protein RecO (267 aa).

This sequence belongs to the RecO family.

Functionally, involved in DNA repair and RecF pathway recombination. The polypeptide is DNA repair protein RecO (Mesoplasma florum (strain ATCC 33453 / NBRC 100688 / NCTC 11704 / L1) (Acholeplasma florum)).